The sequence spans 92 residues: MSRSIHKGPFIDVSLLKRIEALNISGKKEVLKTWSRASTIIPDMVGHTIAVYNGKQHFPVFVSDQMVGHKLGEFVPTRTFRTHVKGDRKARR.

This sequence belongs to the universal ribosomal protein uS19 family.

It is found in the plastid. It localises to the chloroplast. Functionally, protein S19 forms a complex with S13 that binds strongly to the 16S ribosomal RNA. The polypeptide is Small ribosomal subunit protein uS19c (Pyropia yezoensis (Susabi-nori)).